The following is a 40-amino-acid chain: Adenylate kinase (40 aa).

10 to 15 is a binding site for ATP; that stretch reads GAGKGT. Positions 30 to 40 are NMP; that stretch reads STGDMFIKAIK. T31 serves as a coordination point for AMP.

Belongs to the adenylate kinase family. In terms of assembly, monomer.

It is found in the cytoplasm. It carries out the reaction AMP + ATP = 2 ADP. It functions in the pathway purine metabolism; AMP biosynthesis via salvage pathway; AMP from ADP: step 1/1. In terms of biological role, catalyzes the reversible transfer of the terminal phosphate group between ATP and AMP. Plays an important role in cellular energy homeostasis and in adenine nucleotide metabolism. The chain is Adenylate kinase (adk) from Staphylococcus carnosus.